The sequence spans 423 residues: Carboxypeptidase S1 (423 aa).

4 cysteine pairs are disulfide-bonded: C8/C68, C55/C300, C223/C246, and C230/C239. S143 is a catalytic residue. N200 carries an N-linked (GlcNAc...) asparagine glycan. Residue D340 is part of the active site. C343 is a substrate binding site. H397 is an active-site residue. E398 serves as a coordination point for substrate.

The protein belongs to the peptidase S10 family.

The catalysed reaction is Preferential release of a C-terminal arginine or lysine residue.. The sequence is that of Carboxypeptidase S1 from Penicillium janthinellum (Penicillium vitale).